A 270-amino-acid chain; its full sequence is Cell division protein DivIB (270 aa).

At 1–28 (MAENKRVISIENRIPELKKYRKKKLVRH) the chain is on the cytoplasmic side. The helical transmembrane segment at 29 to 49 (LAILIGIFVILIAITLYFLSP) threads the bilayer. Topologically, residues 50–270 (LSKLDKIAVS…AAKEKKETNE (221 aa)) are extracellular. Positions 51–119 (SKLDKIAVSG…NDVQINITEF (69 aa)) constitute a POTRA domain.

This sequence belongs to the FtsQ/DivIB family. DivIB subfamily.

The protein localises to the cell membrane. Functionally, cell division protein that may be involved in stabilizing or promoting the assembly of the division complex. The sequence is that of Cell division protein DivIB from Listeria monocytogenes serovar 1/2a (strain ATCC BAA-679 / EGD-e).